Consider the following 330-residue polypeptide: MNLISLFSGAGGLDLGFQKAGFRIICANEYDKSIWKTYESNHSAKLIKGDISKISSDEFPKCDGIIGGPPCQSWSEGGSLRGIDDPRGKLFYEYIRILKQKKPIFFLAENVKGMMAQRHNKAVQEFIQEFDNAGYDVHIILLNANDYGVAQDRKRVFYIGFRKELNINYLPPIPHLIKPTFKDVIWDLKDNPIPALDKNKTNGNKCIYPNHEYFIGSYSTIFMSRNRVRQWNEPAFTVQASGRQCQLHPQAPVMLKVSKNLNKFVEGKEHLYRRLTVRECARVQGFPDDFIFHYESLNDGYKMIGNAVPVNLAYEIAKTIKSALEICKGN.

The SAM-dependent MTase C5-type domain occupies 1–327 (MNLISLFSGA…KTIKSALEIC (327 aa)). ATP is bound by residues Glu29 and 50–51 (DI). Cys71 is a catalytic residue. ATP is bound at residue Asn260.

Belongs to the class I-like SAM-binding methyltransferase superfamily. C5-methyltransferase family. Monomer.

It carries out the reaction a 2'-deoxycytidine in DNA + S-adenosyl-L-methionine = a 5-methyl-2'-deoxycytidine in DNA + S-adenosyl-L-homocysteine + H(+). Functionally, a methylase, recognizes the double-stranded sequence 5'-GGCC-3', methylates C-3 on both strands, and protects the DNA from cleavage by the HaeIII endonuclease. The protein is Type II methyltransferase M.HaeIII (haeIIIM) of Haemophilus aegyptius.